A 127-amino-acid polypeptide reads, in one-letter code: Holo-[acyl-carrier-protein] synthase (127 aa).

Mg(2+)-binding residues include aspartate 9 and glutamate 58.

This sequence belongs to the P-Pant transferase superfamily. AcpS family. The cofactor is Mg(2+).

The protein localises to the cytoplasm. It catalyses the reaction apo-[ACP] + CoA = holo-[ACP] + adenosine 3',5'-bisphosphate + H(+). In terms of biological role, transfers the 4'-phosphopantetheine moiety from coenzyme A to a Ser of acyl-carrier-protein. This is Holo-[acyl-carrier-protein] synthase from Shewanella sp. (strain MR-4).